We begin with the raw amino-acid sequence, 244 residues long: Type III pantothenate kinase (244 aa).

8-15 (DQGNSACK) provides a ligand contact to ATP. Residue 94–97 (GADR) participates in substrate binding. Asp-96 acts as the Proton acceptor in catalysis. Asp-117 is a K(+) binding site. Thr-120 contributes to the ATP binding site. Residue Thr-175 coordinates substrate.

This sequence belongs to the type III pantothenate kinase family. As to quaternary structure, homodimer. NH4(+) is required as a cofactor. The cofactor is K(+).

The protein localises to the cytoplasm. The enzyme catalyses (R)-pantothenate + ATP = (R)-4'-phosphopantothenate + ADP + H(+). It participates in cofactor biosynthesis; coenzyme A biosynthesis; CoA from (R)-pantothenate: step 1/5. Functionally, catalyzes the phosphorylation of pantothenate (Pan), the first step in CoA biosynthesis. The protein is Type III pantothenate kinase of Porphyromonas gingivalis (strain ATCC 33277 / DSM 20709 / CIP 103683 / JCM 12257 / NCTC 11834 / 2561).